A 280-amino-acid chain; its full sequence is Thioesterase pynI (280 aa).

The segment covering leucine 136 to asparagine 145 has biased composition (acidic residues). The tract at residues leucine 136 to aspartate 167 is disordered.

The protein belongs to the AMT4 thioesterase family.

The protein operates within secondary metabolite biosynthesis. Thioesterase; part of the gene cluster that mediates the biosynthesis of pyranonigrins, a family of antioxidative compounds. The first step of pyranonigrins biosynthesis is performed by the hybrid PKS-NRPS synthetase that condenses 6 malonyl-CoA units to an acetyl starter unit, to form a 1,3,5-trioxotetradecane-6,8-dienyl-ACP. The enoyl reductase (ER) domain of pynA is likely to be functional during the first two rounds of polyketide chain extension, to generate the saturated C-C bonds of the alkyl side chain. PynA subsequently forms the amide bond between the acyl chain and L-serine. Although pynA has a terminal reductase domain, it appears to require the thioesterase pynI for the release of the straight-chain intermediate from pynA via the formation of a tetramic acid pyranonigrin J. The methyltransferase pynC then coverts pyranonigrin J to pyranonigrin I via N-methylation. The FAD-dependent monooxygenase pynG catalyzes an epoxidation-mediated cyclization to form the dihydro-gamma-pyrone moiety, followed by pynD-catalyzed oxidation of the alcohol to the ketone and enolization to yield the characteristic tetramic acid-fused gamma-pyrone core of pyranonigrin H. Pyranonigrin H is substrate of pynH for dehydration-mediated exo-methylene formation from the serine side chain to produce pyranonigrin E, before the oxidase pynE reduces the exo-methylene of pyranonigrin E into a pendant methyl to form pyranonigrin G. The FAD-linked oxidoreductase pynB performs the reverse reaction and converts pyranonigrin G back to pyranonigrin E. The protein is Thioesterase pynI of Aspergillus niger (strain ATCC MYA-4892 / CBS 513.88 / FGSC A1513).